A 140-amino-acid chain; its full sequence is FAD synthase (140 aa).

Residues 9–10, 14–17, Asn92, and Tyr119 contribute to the ATP site; these read TF and HPGH.

It belongs to the archaeal FAD synthase family. In terms of assembly, homodimer. A divalent metal cation serves as cofactor.

The enzyme catalyses FMN + ATP + H(+) = FAD + diphosphate. It functions in the pathway cofactor biosynthesis; FAD biosynthesis; FAD from FMN: step 1/1. Catalyzes the transfer of the AMP portion of ATP to flavin mononucleotide (FMN) to produce flavin adenine dinucleotide (FAD) coenzyme. This is FAD synthase from Methanocorpusculum labreanum (strain ATCC 43576 / DSM 4855 / Z).